We begin with the raw amino-acid sequence, 268 residues long: Imidazole glycerol phosphate synthase subunit HisF (268 aa).

Residues Asp12 and Asp131 contribute to the active site.

This sequence belongs to the HisA/HisF family. Heterodimer of HisH and HisF.

It localises to the cytoplasm. The enzyme catalyses 5-[(5-phospho-1-deoxy-D-ribulos-1-ylimino)methylamino]-1-(5-phospho-beta-D-ribosyl)imidazole-4-carboxamide + L-glutamine = D-erythro-1-(imidazol-4-yl)glycerol 3-phosphate + 5-amino-1-(5-phospho-beta-D-ribosyl)imidazole-4-carboxamide + L-glutamate + H(+). Its pathway is amino-acid biosynthesis; L-histidine biosynthesis; L-histidine from 5-phospho-alpha-D-ribose 1-diphosphate: step 5/9. Its function is as follows. IGPS catalyzes the conversion of PRFAR and glutamine to IGP, AICAR and glutamate. The HisF subunit catalyzes the cyclization activity that produces IGP and AICAR from PRFAR using the ammonia provided by the HisH subunit. The protein is Imidazole glycerol phosphate synthase subunit HisF of Methanosphaerula palustris (strain ATCC BAA-1556 / DSM 19958 / E1-9c).